A 393-amino-acid polypeptide reads, in one-letter code: Acetylornithine aminotransferase (393 aa).

Pyridoxal 5'-phosphate is bound by residues 96–97 and Phe-129; that span reads GT. Position 132 (Arg-132) interacts with N(2)-acetyl-L-ornithine. 214–217 is a binding site for pyridoxal 5'-phosphate; that stretch reads DEVQ. Lys-243 carries the post-translational modification N6-(pyridoxal phosphate)lysine. Ser-271 provides a ligand contact to N(2)-acetyl-L-ornithine. Thr-272 contributes to the pyridoxal 5'-phosphate binding site.

Belongs to the class-III pyridoxal-phosphate-dependent aminotransferase family. ArgD subfamily. Homodimer. It depends on pyridoxal 5'-phosphate as a cofactor.

Its subcellular location is the cytoplasm. The catalysed reaction is N(2)-acetyl-L-ornithine + 2-oxoglutarate = N-acetyl-L-glutamate 5-semialdehyde + L-glutamate. It participates in amino-acid biosynthesis; L-arginine biosynthesis; N(2)-acetyl-L-ornithine from L-glutamate: step 4/4. The protein is Acetylornithine aminotransferase of Rhodobacter capsulatus (strain ATCC BAA-309 / NBRC 16581 / SB1003).